Consider the following 681-residue polypeptide: Probable L-type lectin-domain containing receptor kinase VII.2 (681 aa).

A signal peptide spans 1–23; the sequence is MFSKVSILLFSLASLLLFRSTTG. Residues 24–260 are legume-lectin like; that stretch reads IEFIYNSNFT…SHRILSWSFS (237 aa). The Extracellular segment spans residues 24-290; that stretch reads IEFIYNSNFT…SGDSVLKSKG (267 aa). Residues asparagine 31, asparagine 42, asparagine 56, asparagine 72, asparagine 126, asparagine 202, asparagine 207, asparagine 228, and asparagine 263 are each glycosylated (N-linked (GlcNAc...) asparagine). The helical transmembrane segment at 291–311 threads the bilayer; the sequence is FIAGVSSGVVLLVSVIGLLCF. Topologically, residues 312 to 681 are cytoplasmic; sequence YVVRRRRQRL…QTYDSILHGR (370 aa). Positions 349 to 624 constitute a Protein kinase domain; that stretch reads FSDENMIGYG…VVQILEQGRL (276 aa). ATP contacts are provided by residues 355–363 and lysine 376; that span reads IGYGGNSKV. Aspartate 475 functions as the Proton acceptor in the catalytic mechanism.

In the C-terminal section; belongs to the protein kinase superfamily. Ser/Thr protein kinase family. This sequence in the N-terminal section; belongs to the leguminous lectin family.

Its subcellular location is the cell membrane. The catalysed reaction is L-seryl-[protein] + ATP = O-phospho-L-seryl-[protein] + ADP + H(+). It carries out the reaction L-threonyl-[protein] + ATP = O-phospho-L-threonyl-[protein] + ADP + H(+). The chain is Probable L-type lectin-domain containing receptor kinase VII.2 (LECRK72) from Arabidopsis thaliana (Mouse-ear cress).